The chain runs to 128 residues: Ribonuclease pancreatic (128 aa).

The segment covering 1 to 13 (KESPAMKFERQHM) has biased composition (basic and acidic residues). Residues 1-26 (KESPAMKFERQHMDSGSTSSSNPTYC) are disordered. The substrate site is built by K7 and R10. H12 acts as the Proton acceptor in catalysis. A compositionally biased stretch (polar residues) spans 14 to 26 (DSGSTSSSNPTYC). Disulfide bonds link C26/C84, C40/C95, C58/C110, and C65/C72. N34 carries N-linked (GlcNAc...) asparagine glycosylation. Substrate is bound at residue 41-45 (KPVNT). An N-linked (GlcNAc...) asparagine glycan is attached at N62. Residues K66 and R85 each coordinate substrate. Residue H119 is the Proton donor of the active site.

It belongs to the pancreatic ribonuclease family. Monomer. Interacts with and forms tight 1:1 complexes with RNH1. Dimerization of two such complexes may occur. Interaction with RNH1 inhibits this protein. Pancreas.

The protein localises to the secreted. It carries out the reaction an [RNA] containing cytidine + H2O = an [RNA]-3'-cytidine-3'-phosphate + a 5'-hydroxy-ribonucleotide-3'-[RNA].. The catalysed reaction is an [RNA] containing uridine + H2O = an [RNA]-3'-uridine-3'-phosphate + a 5'-hydroxy-ribonucleotide-3'-[RNA].. Endonuclease that catalyzes the cleavage of RNA on the 3' side of pyrimidine nucleotides. Acts on single-stranded and double-stranded RNA. This Equus caballus (Horse) protein is Ribonuclease pancreatic (RNASE1).